The primary structure comprises 130 residues: Small ribosomal subunit protein uS8 (130 aa).

The protein belongs to the universal ribosomal protein uS8 family. Part of the 30S ribosomal subunit. Contacts proteins S5 and S12.

Functionally, one of the primary rRNA binding proteins, it binds directly to 16S rRNA central domain where it helps coordinate assembly of the platform of the 30S subunit. This Edwardsiella ictaluri (strain 93-146) protein is Small ribosomal subunit protein uS8.